The primary structure comprises 430 residues: KIN17-like protein (430 aa).

The C2H2-type zinc finger occupies 28 to 50; sequence CQMCQKQCRDENGFKCHCMSESH. Residues 51–160 are winged helix-turn-helix (wHTH); sequence QRQMQVFGQA…KARLKRKRIK (110 aa). Residues 147 to 183 adopt a coiled-coil conformation; sequence EQAVKARLKRKRIKSDLAEDERQERMIARQIERAQQS. The short motif at 155–158 is the Nuclear localization signal (NLS) element; sequence KRKR. Disordered regions lie at residues 179-230 and 261-284; these read RAQQ…ANKA and EEED…GKDA. A compositionally biased stretch (acidic residues) spans 209 to 224; sequence EYSDSENDHEGQEEDA. Basic and acidic residues predominate over residues 261–278; it reads EEEDEVSARDKEKEELAK. A coiled-coil region spans residues 283 to 312; sequence DAINAAEARRSALDELMKEEEKAKERSNRK. Positions 319–370 are C-terminal subdomain A; sequence GIVVKVMSKSLAEKGYCKQKGVVKRVIDKYVGEIEMLESKHVLRVDQDELET. Residues 376-427 are C-terminal subdomain B; it reads GGLVRIVNGAYRGSNARLLSVDTERFCAKVQVEKGLYDGKVLKAIEYEDICK.

Belongs to the KIN17 family.

The protein localises to the nucleus. The chain is KIN17-like protein from Oryza sativa subsp. indica (Rice).